The sequence spans 336 residues: Alpha-N-acetylgalactosaminide alpha-2,6-sialyltransferase 5 (336 aa).

The Cytoplasmic portion of the chain corresponds to 1-8; sequence MKTLMRHG. A helical; Signal-anchor for type II membrane protein transmembrane segment spans residues 9 to 29; it reads LAVCLALTTMCTSLLLVYSSL. At 30-336 the chain is on the lumenal side; the sequence is GGQKERPPQQ…INHPENKPVF (307 aa). The segment at 32–81 is disordered; sequence QKERPPQQQQQQQQQQQQASATGSSQPAAESSTQQRPGVPAGPRPLDGYL. Over residues 38–49 the composition is skewed to low complexity; it reads QQQQQQQQQQQQ. Polar residues predominate over residues 50–67; sequence ASATGSSQPAAESSTQQR. C96 and C245 form a disulfide bridge. Residues N137 and N161 are each glycosylated (N-linked (GlcNAc...) asparagine).

It belongs to the glycosyltransferase 29 family.

The protein resides in the golgi apparatus membrane. It carries out the reaction a ganglioside GM1b (d18:1(4E)) + CMP-N-acetyl-beta-neuraminate = a ganglioside GD1alpha (d18:1(4E)) + CMP + H(+). It catalyses the reaction N-acetyl-alpha-neuraminosyl-(2-&gt;3)-beta-D-galactosyl-(1-&gt;3)-N-acetyl-beta-D-glucosaminyl-(1-&gt;3)-beta-D-galactosyl-(1-&gt;4)-beta-D-glucosyl-(1&lt;-&gt;1')-N-acyl-sphing-4-enine + CMP-N-acetyl-beta-neuraminate = N-acetyl-alpha-neuraminosyl-(2-&gt;3)-beta-D-galactosyl-(1-&gt;3)-[N-acetyl-alpha-neuraminosyl-(2-&gt;6)]-N-acetyl-beta-D-glucosaminyl-(1-&gt;3)-beta-D-galactosyl-(1-&gt;4)-beta-D-glucosyl-(1&lt;-&gt;1')-N-acyl-sphing-4-enine + CMP + H(+). The protein operates within glycolipid biosynthesis. In terms of biological role, predominantly catalyzes the biosynthesis of ganglioside GD1alpha from GM1b in the brain, by transferring the sialyl group (N-acetyl-alpha-neuraminyl or NeuAc) from CMP-NeuAc to the GalNAc residue on the NeuAc-alpha-2,3-Gal-beta-1,3-GalNAc sequence of GM1b. GD1alpha is a critical molecule in the communication and interaction between neuronal cells and their supportive cells, particularly in brain tissues, and functions as an adhesion molecule in the process of metastasis. Also shows activity towards sialyl Lc4Cer (N-acetyl-alpha-neuraminosyl-(2-&gt;3)-beta-D-galactosyl-(1-&gt;3)-N-acetyl-beta-D-glucosaminyl-(1-&gt;3)-beta-D-galactosyl-(1-&gt;4)-beta-D-glucosyl-(1&lt;-&gt;1')-N-acyl-sphing-4-enine) generating disialyl Lc4Cer, which can lead to the synthesis of disialyl Lewis a (Le(a)), suggested to be a cancer-associated antigen. This chain is Alpha-N-acetylgalactosaminide alpha-2,6-sialyltransferase 5 (ST6GALNAC5), found in Homo sapiens (Human).